The following is a 780-amino-acid chain: Acetyl-CoA decarbonylase/synthase complex subunit alpha (780 aa).

6 residues coordinate [4Fe-4S] cluster: Cys73, Cys76, Cys77, Cys79, Cys84, and Cys93. Residue His116 coordinates CO. Residues His250, Cys278, and Cys317 each contribute to the [Ni-4Fe-4S] cluster site. 2 consecutive 4Fe-4S ferredoxin-type domains span residues Ile399–Val429 and Leu440–Val469. [4Fe-4S] cluster contacts are provided by Cys409, Cys412, Cys415, Cys419, Cys449, Cys452, Cys455, and Cys459. 3 residues coordinate [Ni-4Fe-4S] cluster: Cys517, Cys546, and Cys581.

This sequence belongs to the Ni-containing carbon monoxide dehydrogenase family. As to quaternary structure, heterotetramer of two alpha and two epsilon subunits. The ACDS complex is made up of alpha, epsilon, beta, gamma and delta subunits with a probable stoichiometry of (alpha(2)epsilon(2))(4)-beta(8)-(gamma(1)delta(1))(8). The cofactor is [4Fe-4S] cluster. It depends on [Ni-4Fe-4S] cluster as a cofactor.

It carries out the reaction CO + 2 oxidized [2Fe-2S]-[ferredoxin] + H2O = 2 reduced [2Fe-2S]-[ferredoxin] + CO2 + 2 H(+). In terms of biological role, part of the ACDS complex that catalyzes the reversible cleavage of acetyl-CoA, allowing autotrophic growth from CO(2). The alpha-epsilon subcomponent functions as a carbon monoxide dehydrogenase. The polypeptide is Acetyl-CoA decarbonylase/synthase complex subunit alpha (Methanothermobacter thermautotrophicus (strain ATCC 29096 / DSM 1053 / JCM 10044 / NBRC 100330 / Delta H) (Methanobacterium thermoautotrophicum)).